A 170-amino-acid chain; its full sequence is MKTQRDSPSLGRWSLVLLLLGLVMPLAIVAQVLSYQEAVLRAIDGINQRSSDANLYRLLDLDPRPTMDGDPDTPKPVSFTVKETVCPRTTQQSPEDCDFKKDGLVKRCVGTVILNQARDSFDISCDKDNRRFALPGNFFRKAREKIGKEFKRIVQRIKDFLQHLVPRTEA.

An N-terminal signal peptide occupies residues 1–30 (MKTQRDSPSLGRWSLVLLLLGLVMPLAIVA). Positions 31-131 (QVLSYQEAVL…DISCDKDNRR (101 aa)) are cleaved as a propeptide — cathelin-like domain (CLD). Intrachain disulfides connect Cys86–Cys97 and Cys108–Cys125. The segment at 150–162 (FKRIVQRIKDFLQ) is active core.

It belongs to the cathelicidin family. As to quaternary structure, monomer, homodimer or homotrimer (in vitro). Oligomerizes as tetra- or hexamer in solution (in vitro). Post-translationally, proteolytically cleaved by proteinase PRTN3 into antibacterial peptide LL-37. Proteolytically cleaved by cathepsin CTSG and neutrophil elastase ELANE. In terms of processing, resistant to proteolytic degradation in solution, and when bound to both zwitterionic (mimicking mammalian membranes) and negatively charged membranes (mimicking bacterial membranes). After secretion onto the skin surface, the CAMP gene product is processed by a serine protease-dependent mechanism into multiple novel antimicrobial peptides distinct from and shorter than cathelicidin LL-37. These peptides show enhanced antimicrobial action, acquiring the ability to kill skin pathogens such as S.aureus, E.coli and C.albicans. These peptides have lost the ability to stimulate CXCL8/IL8 release from keratinocytes. The peptides act synergistically, killing bacteria at lower concentrations when present together, and maintain activity at increased salt condition.

The protein localises to the secreted. It is found in the vesicle. Its function is as follows. Antimicrobial protein that is an integral component of the innate immune system. Binds to bacterial lipopolysaccharides (LPS). Acts via neutrophil N-formyl peptide receptors to enhance the release of CXCL2. Postsecretory processing generates multiple cathelicidin antimicrobial peptides with various lengths which act as a topical antimicrobial defense in sweat on skin. The unprocessed precursor form, cathelicidin antimicrobial peptide, inhibits the growth of Gram-negative E.coli and E.aerogenes with efficiencies comparable to that of the mature peptide LL-37 (in vitro). Antimicrobial peptide that is an integral component of the innate immune system. Binds to bacterial lipopolysaccharides (LPS). Causes membrane permeabilization by forming transmembrane pores (in vitro). Causes lysis of E.coli. Exhibits antimicrobial activity against Gram-negative bacteria such as P.aeruginosa, S.typhimurium, E.aerogenes, E.coli and P.syringae, Gram-positive bacteria such as L.monocytogenes, S.epidermidis, S.pyogenes and S.aureus, as well as vancomycin-resistant enterococci (in vitro). Exhibits antimicrobial activity against methicillin-resistant S.aureus, P.mirabilis, and C.albicans in low-salt media, but not in media containing 100 mM NaCl (in vitro). Forms chiral supramolecular assemblies with quinolone signal (PQS) molecules of P.aeruginosa, which may lead to interference of bacterial quorum signaling and perturbance of bacterial biofilm formation. May form supramolecular fiber-like assemblies on bacterial membranes. Induces cytokine and chemokine producation as well as TNF/TNFA and CSF2/GMCSF production in normal human keratinocytes. Exhibits hemolytic activity against red blood cells. In terms of biological role, exhibits antimicrobial activity against E.coli and B.megaterium (in vitro). This Nomascus gabriellae (Red-cheeked gibbon) protein is Cathelicidin antimicrobial peptide.